A 619-amino-acid polypeptide reads, in one-letter code: 1-deoxy-D-xylulose-5-phosphate synthase (619 aa).

Thiamine diphosphate-binding positions include histidine 80 and 121–123 (GHS). Aspartate 152 contributes to the Mg(2+) binding site. Thiamine diphosphate contacts are provided by residues 153 to 154 (GA), asparagine 181, tyrosine 288, and glutamate 370. Asparagine 181 serves as a coordination point for Mg(2+).

Belongs to the transketolase family. DXPS subfamily. As to quaternary structure, homodimer. It depends on Mg(2+) as a cofactor. Thiamine diphosphate serves as cofactor.

The enzyme catalyses D-glyceraldehyde 3-phosphate + pyruvate + H(+) = 1-deoxy-D-xylulose 5-phosphate + CO2. Its pathway is metabolic intermediate biosynthesis; 1-deoxy-D-xylulose 5-phosphate biosynthesis; 1-deoxy-D-xylulose 5-phosphate from D-glyceraldehyde 3-phosphate and pyruvate: step 1/1. Catalyzes the acyloin condensation reaction between C atoms 2 and 3 of pyruvate and glyceraldehyde 3-phosphate to yield 1-deoxy-D-xylulose-5-phosphate (DXP). This chain is 1-deoxy-D-xylulose-5-phosphate synthase, found in Yersinia pseudotuberculosis serotype O:3 (strain YPIII).